Here is a 422-residue protein sequence, read N- to C-terminus: 4-hydroxy-3-methylbut-2-en-1-yl diphosphate synthase (flavodoxin) (422 aa).

Residues cysteine 316, cysteine 319, cysteine 362, and glutamate 369 each contribute to the [4Fe-4S] cluster site.

The protein belongs to the IspG family. Requires [4Fe-4S] cluster as cofactor.

The catalysed reaction is (2E)-4-hydroxy-3-methylbut-2-enyl diphosphate + oxidized [flavodoxin] + H2O + 2 H(+) = 2-C-methyl-D-erythritol 2,4-cyclic diphosphate + reduced [flavodoxin]. It functions in the pathway isoprenoid biosynthesis; isopentenyl diphosphate biosynthesis via DXP pathway; isopentenyl diphosphate from 1-deoxy-D-xylulose 5-phosphate: step 5/6. Functionally, converts 2C-methyl-D-erythritol 2,4-cyclodiphosphate (ME-2,4cPP) into 1-hydroxy-2-methyl-2-(E)-butenyl 4-diphosphate. This chain is 4-hydroxy-3-methylbut-2-en-1-yl diphosphate synthase (flavodoxin), found in Ehrlichia ruminantium (strain Welgevonden).